The following is a 455-amino-acid chain: Kynurenine 3-monooxygenase (455 aa).

It belongs to the aromatic-ring hydroxylase family. KMO subfamily. It depends on FAD as a cofactor.

It catalyses the reaction L-kynurenine + NADPH + O2 + H(+) = 3-hydroxy-L-kynurenine + NADP(+) + H2O. Its pathway is cofactor biosynthesis; NAD(+) biosynthesis; quinolinate from L-kynurenine: step 1/3. Its function is as follows. Catalyzes the hydroxylation of L-kynurenine (L-Kyn) to form 3-hydroxy-L-kynurenine (L-3OHKyn). Required for synthesis of quinolinic acid. The sequence is that of Kynurenine 3-monooxygenase from Xanthomonas oryzae pv. oryzae (strain KACC10331 / KXO85).